Here is a 526-residue protein sequence, read N- to C-terminus: ATP synthase subunit alpha (526 aa).

Glycine 171–threonine 178 serves as a coordination point for ATP.

The protein belongs to the ATPase alpha/beta chains family. As to quaternary structure, F-type ATPases have 2 components, CF(1) - the catalytic core - and CF(0) - the membrane proton channel. CF(1) has five subunits: alpha(3), beta(3), gamma(1), delta(1), epsilon(1). CF(0) has three main subunits: a(1), b(2) and c(9-12). The alpha and beta chains form an alternating ring which encloses part of the gamma chain. CF(1) is attached to CF(0) by a central stalk formed by the gamma and epsilon chains, while a peripheral stalk is formed by the delta and b chains.

Its subcellular location is the cell membrane. It catalyses the reaction ATP + H2O + 4 H(+)(in) = ADP + phosphate + 5 H(+)(out). Functionally, produces ATP from ADP in the presence of a proton gradient across the membrane. The alpha chain is a regulatory subunit. The sequence is that of ATP synthase subunit alpha from Christiangramia forsetii (strain DSM 17595 / CGMCC 1.15422 / KT0803) (Gramella forsetii).